The sequence spans 137 residues: Phosphoribosyl-ATP pyrophosphatase (137 aa).

The segment covering 114-124 (EGTSGIEEKAL) has biased composition (basic and acidic residues). A disordered region spans residues 114-137 (EGTSGIEEKALRKSLQRAAEEAQP).

Belongs to the PRA-PH family.

Its subcellular location is the cytoplasm. It carries out the reaction 1-(5-phospho-beta-D-ribosyl)-ATP + H2O = 1-(5-phospho-beta-D-ribosyl)-5'-AMP + diphosphate + H(+). It functions in the pathway amino-acid biosynthesis; L-histidine biosynthesis; L-histidine from 5-phospho-alpha-D-ribose 1-diphosphate: step 2/9. The protein is Phosphoribosyl-ATP pyrophosphatase of Paracidovorax citrulli (strain AAC00-1) (Acidovorax citrulli).